Here is a 302-residue protein sequence, read N- to C-terminus: MPQKRLQMLRGLIELVRPHNLVVAALTTLIGYGTVASIYGGDIVSSGYAYAALIVVLVAAGGYVINDYYDIETDMVAKPWRPIVSGRVSPGAARFYAYMLFTIGLIIALVTCPNFIVFGFAVLNALLVHEYSRWIKRTGLPGNIVIAFNSASTIVFGALYASCMIKGKVVLPSVALIPVLYAFLLVLGREFVKGIEDVKGDAIAGIGTLAVRFGVRTAYMASVAVLGLVVVLSPFPYISGVYNMAYLILALVVDVLIAYSLAILGRGVARGLEDAIRASRRARSALKLAFMVGALAFLAGLM.

The next 8 helical transmembrane spans lie at 21 to 41 (LVVAALTTLIGYGTVASIYGG), 43 to 63 (IVSSGYAYAALIVVLVAAGGY), 103 to 123 (IGLIIALVTCPNFIVFGFAVL), 144 to 164 (IVIAFNSASTIVFGALYASCM), 167 to 187 (GKVVLPSVALIPVLYAFLLVL), 218 to 238 (AYMASVAVLGLVVVLSPFPYI), 244 to 264 (MAYLILALVVDVLIAYSLAIL), and 282 to 302 (ARSALKLAFMVGALAFLAGLM).

This sequence belongs to the UbiA prenyltransferase family. DGGGP synthase subfamily. Requires Mg(2+) as cofactor.

The protein resides in the cell membrane. The catalysed reaction is sn-3-O-(geranylgeranyl)glycerol 1-phosphate + (2E,6E,10E)-geranylgeranyl diphosphate = 2,3-bis-O-(geranylgeranyl)-sn-glycerol 1-phosphate + diphosphate. Its pathway is membrane lipid metabolism; glycerophospholipid metabolism. Functionally, prenyltransferase that catalyzes the transfer of the geranylgeranyl moiety of geranylgeranyl diphosphate (GGPP) to the C2 hydroxyl of (S)-3-O-geranylgeranylglyceryl phosphate (GGGP). This reaction is the second ether-bond-formation step in the biosynthesis of archaeal membrane lipids. The protein is Digeranylgeranylglyceryl phosphate synthase of Hyperthermus butylicus (strain DSM 5456 / JCM 9403 / PLM1-5).